A 316-amino-acid polypeptide reads, in one-letter code: Ribosomal RNA small subunit methyltransferase H (316 aa).

S-adenosyl-L-methionine-binding positions include 35 to 37 (SGH), Asp55, Phe84, Asp105, and Gln112.

Belongs to the methyltransferase superfamily. RsmH family.

The protein localises to the cytoplasm. It carries out the reaction cytidine(1402) in 16S rRNA + S-adenosyl-L-methionine = N(4)-methylcytidine(1402) in 16S rRNA + S-adenosyl-L-homocysteine + H(+). In terms of biological role, specifically methylates the N4 position of cytidine in position 1402 (C1402) of 16S rRNA. The polypeptide is Ribosomal RNA small subunit methyltransferase H (Streptococcus pyogenes serotype M4 (strain MGAS10750)).